A 196-amino-acid polypeptide reads, in one-letter code: MLKIEGLVLASSSKYRLALLEQIGVVPGEVVSPNIDESLLKGELPRRYCMRMARTKADAVAALRSDKFVLGADTVAYCGKRVLSKTESEDCAVRYLEMLSGRRHRVCTSVCLRSPGGIVHERSVVSVVKFKSMSKGEIEYYISSGQWRGKAGGYGIQGFAGALISWIQGSYSSIAGLPLHETYCLLCGYFDLKHIP.

The active-site Proton acceptor is D73.

This sequence belongs to the Maf family. A divalent metal cation serves as cofactor.

The protein localises to the cytoplasm. The catalysed reaction is a ribonucleoside 5'-triphosphate + H2O = a ribonucleoside 5'-phosphate + diphosphate + H(+). It carries out the reaction a 2'-deoxyribonucleoside 5'-triphosphate + H2O = a 2'-deoxyribonucleoside 5'-phosphate + diphosphate + H(+). Its function is as follows. Nucleoside triphosphate pyrophosphatase. May have a dual role in cell division arrest and in preventing the incorporation of modified nucleotides into cellular nucleic acids. The chain is Nucleoside triphosphate pyrophosphatase from Anaplasma marginale (strain Florida).